Reading from the N-terminus, the 881-residue chain is Phosphoenolpyruvate carboxylase (881 aa).

Active-site residues include histidine 139 and lysine 544.

This sequence belongs to the PEPCase type 1 family. Requires Mg(2+) as cofactor.

It carries out the reaction oxaloacetate + phosphate = phosphoenolpyruvate + hydrogencarbonate. Functionally, forms oxaloacetate, a four-carbon dicarboxylic acid source for the tricarboxylic acid cycle. The chain is Phosphoenolpyruvate carboxylase from Marinobacter nauticus (strain ATCC 700491 / DSM 11845 / VT8) (Marinobacter aquaeolei).